A 463-amino-acid chain; its full sequence is Sodium-coupled neutral amino acid transporter 7 (463 aa).

Ser-28 bears the Phosphoserine mark. Helical transmembrane passes span 56-76 (AIFI…PAAF), 82-102 (VAAG…GLVI), 130-150 (LCEV…LIII), 179-199 (FTIS…REIG), 206-226 (FLSV…YIWP), 240-260 (ASWI…QCHV), 283-303 (AAMV…FLTF), 320-340 (MAVA…YPIL), 372-392 (VLQT…IPDI), 396-416 (ISVI…LCLI), and 429-449 (ASWW…AFIF).

This sequence belongs to the amino acid/polyamine transporter 2 family. In terms of assembly, interacts with the mTORC1 complex; this interaction mediates the recruitment of mTORC1 to the lysosome and its subsequent activation.

The protein resides in the lysosome membrane. Its subcellular location is the cell projection. It localises to the axon. It catalyses the reaction L-asparagine(in) + Na(+)(in) = L-asparagine(out) + Na(+)(out). It carries out the reaction L-glutamine(in) + Na(+)(in) = L-glutamine(out) + Na(+)(out). In terms of biological role, symporter that selectively cotransports sodium ions and amino acids, such as L-glutamine and L-asparagine from the lysosome into the cytoplasm and may participates in mTORC1 activation. The transport activity requires an acidic lysosomal lumen. In Bos taurus (Bovine), this protein is Sodium-coupled neutral amino acid transporter 7.